The primary structure comprises 344 residues: Gas vesicle ATPase GvpN2 (344 aa).

The disordered stretch occupies residues Met1–Phe55. Residues Asn7–Ser17 are compositionally biased toward basic residues. Residues Ser18–Gly52 show a composition bias toward basic and acidic residues. Gly89–Thr96 provides a ligand contact to ATP.

It belongs to the CbbQ/NirQ/NorQ/GpvN family. Forms homodimers, a GvpN-GvpO heterodimer, interacts with GvpC and GvpL, might interact with GvpA.

The protein localises to the gas vesicle. Its subcellular location is the cytoplasm. The enzyme catalyses ATP + H2O = ADP + phosphate + H(+). An ATPase that functions in gas vesicle formation. A minor component of the gas vesicle, also found in soluble extracts. Gas vesicles are hollow, gas filled proteinaceous nanostructures found in several microbial planktonic microorganisms. They allow positioning of halobacteria at the optimal depth for growth in the poorly aerated, shallow brine pools of their habitat. Functionally, expression of 2 c-vac DNA fragments containing 2 divergently transcribed regions (gvpE-gvpF-gvpG-gvpH-gvpI-gvpJ-gvpK-gvpL-gvpM and gvpA-gvpC-gvpN-gvpO) allows H.volcanii to produce gas vesicles. In Halobacterium salinarum (strain ATCC 700922 / JCM 11081 / NRC-1) (Halobacterium halobium), this protein is Gas vesicle ATPase GvpN2.